The chain runs to 252 residues: Imidazole glycerol phosphate synthase subunit HisF (252 aa).

Catalysis depends on residues D11 and D130.

The protein belongs to the HisA/HisF family. In terms of assembly, heterodimer of HisH and HisF.

It is found in the cytoplasm. It catalyses the reaction 5-[(5-phospho-1-deoxy-D-ribulos-1-ylimino)methylamino]-1-(5-phospho-beta-D-ribosyl)imidazole-4-carboxamide + L-glutamine = D-erythro-1-(imidazol-4-yl)glycerol 3-phosphate + 5-amino-1-(5-phospho-beta-D-ribosyl)imidazole-4-carboxamide + L-glutamate + H(+). The protein operates within amino-acid biosynthesis; L-histidine biosynthesis; L-histidine from 5-phospho-alpha-D-ribose 1-diphosphate: step 5/9. Functionally, IGPS catalyzes the conversion of PRFAR and glutamine to IGP, AICAR and glutamate. The HisF subunit catalyzes the cyclization activity that produces IGP and AICAR from PRFAR using the ammonia provided by the HisH subunit. The sequence is that of Imidazole glycerol phosphate synthase subunit HisF from Geobacillus kaustophilus (strain HTA426).